The sequence spans 249 residues: Secreted flagellin C (249 aa).

In terms of processing, the secreted form is about 1 kDa larger than the whole cell lysate form, presumably due to post-translational modification. A 22 kDa form is also found in the secreted fraction, probably resulting from proteolysis.

It localises to the secreted. Its subcellular location is the host cell surface. Its function is as follows. Plays a role in virulence. This is Secreted flagellin C (flaC) from Campylobacter jejuni subsp. jejuni serotype O:2 (strain ATCC 700819 / NCTC 11168).